A 191-amino-acid chain; its full sequence is MEYFDMRKMSVNLWRNAAGETREICTFPPAKRDFYWRASIASIAANGEFSLFPGMERIVTLLEGGEMLLESADRFNHTLKPLQPFAFTADQVVKAKLTAGQMSMDFNIMTRLDVCKAKVRIAERTFTTFGSRGGVVFVINGAWQLGDKLLTTDQGVCWFDGRHTLRLLQPQGKLLFSEINWLAGHSPDQVQ.

The protein belongs to the Ves family.

The protein is Protein Ves of Shigella flexneri.